A 179-amino-acid polypeptide reads, in one-letter code: Adenine phosphoribosyltransferase (179 aa).

The protein belongs to the purine/pyrimidine phosphoribosyltransferase family. Homodimer.

The protein resides in the cytoplasm. The enzyme catalyses AMP + diphosphate = 5-phospho-alpha-D-ribose 1-diphosphate + adenine. The protein operates within purine metabolism; AMP biosynthesis via salvage pathway; AMP from adenine: step 1/1. Catalyzes a salvage reaction resulting in the formation of AMP, that is energically less costly than de novo synthesis. This Dinoroseobacter shibae (strain DSM 16493 / NCIMB 14021 / DFL 12) protein is Adenine phosphoribosyltransferase.